Here is a 92-residue protein sequence, read N- to C-terminus: UPF0250 protein CGSHiEE_03170 (92 aa).

Belongs to the UPF0250 family.

The sequence is that of UPF0250 protein CGSHiEE_03170 from Haemophilus influenzae (strain PittEE).